The sequence spans 369 residues: Phosphate-binding protein PstS 3 (369 aa).

An N-terminal signal peptide occupies residues 1–21 (MKLNQFGAAIGLLATGALLSG). A lipid anchor (N-palmitoyl cysteine) is attached at Cys-22. Cys-22 carries S-diacylglycerol cysteine lipidation. Phosphate is bound by residues 55–57 (STA), Ser-85, Asp-103, and 190–192 (SGT).

This sequence belongs to the PstS family. In terms of assembly, the complex is composed of two ATP-binding proteins (PstB), two transmembrane proteins (PstC and PstA) and a solute-binding protein (PstS).

The protein resides in the cell membrane. Functionally, part of the ABC transporter complex PstSACB involved in phosphate import. This is Phosphate-binding protein PstS 3 (pstS2) from Mycobacterium leprae (strain TN).